The sequence spans 775 residues: Mitochondrial intermediate peptidase (775 aa).

Residues 1 to 28 (MIARPARDVLSSATKKQFRFRGCLAARH) constitute a mitochondrion transit peptide. H558 contributes to the Zn(2+) binding site. Residue E559 is part of the active site. Zn(2+) contacts are provided by H562 and H565.

This sequence belongs to the peptidase M3 family. The cofactor is Zn(2+).

The protein localises to the mitochondrion matrix. The catalysed reaction is Release of an N-terminal octapeptide as second stage of processing of some proteins imported into the mitochondrion.. Its function is as follows. Cleaves proteins, imported into the mitochondrion, to their mature size. While most mitochondrial precursor proteins are processed to the mature form in one step by mitochondrial processing peptidase (MPP), the sequential cleavage by MIP of an octapeptide after initial processing by MPP is a required step for a subgroup of nuclear-encoded precursor proteins destined for the matrix or the inner membrane. The polypeptide is Mitochondrial intermediate peptidase (OCT1) (Schizophyllum commune (Split gill fungus)).